The chain runs to 373 residues: Anhydro-N-acetylmuramic acid kinase (373 aa).

12–19 (GTSLDGVD) provides a ligand contact to ATP.

This sequence belongs to the anhydro-N-acetylmuramic acid kinase family.

The catalysed reaction is 1,6-anhydro-N-acetyl-beta-muramate + ATP + H2O = N-acetyl-D-muramate 6-phosphate + ADP + H(+). It participates in amino-sugar metabolism; 1,6-anhydro-N-acetylmuramate degradation. The protein operates within cell wall biogenesis; peptidoglycan recycling. Its function is as follows. Catalyzes the specific phosphorylation of 1,6-anhydro-N-acetylmuramic acid (anhMurNAc) with the simultaneous cleavage of the 1,6-anhydro ring, generating MurNAc-6-P. Is required for the utilization of anhMurNAc either imported from the medium or derived from its own cell wall murein, and thus plays a role in cell wall recycling. In Salmonella gallinarum (strain 287/91 / NCTC 13346), this protein is Anhydro-N-acetylmuramic acid kinase.